The following is a 467-amino-acid chain: MDRYGNLSDDGEVDHSFFDSDVDESANKVGVASVGSNKQENINTNVNKDVNKISFENKQNVMSGEKGRNHVYEEKIAKPSSPSTAAVAPRPDSALKSGRTSAQSLRIEATIPTGIPQIRREFEDNYYPDEEDSSEDECHNSRPKTAKQTNIGKKSTGKSNRDFVSTISSSDTEYSDTGSDDGASKSSYQSSKGSLMRSPERKPSRSSMRELRHYAEESEDTVTDVTPLSTPDISPIQSFDLAATSEVLKSTFKRQENISQEIYDPDNDLRINQKAVQDAVDLNQLLKAFMHLDKKEPSSVQDENPVMHNKKNFSFSNDEVRQIERENQRLLKELTRQAAKPRSKSLTPKKPMSAPTRLYHSAINRQKEQQRIERENMALLKRLESVKPTVGMTRTEQLMDYQRQAGYLSATALSPRPGKASVSRLSPSVSSGGFSRMSSATNRSERTGSSGALLRPTRSGNVRAAWQ.

4 disordered regions span residues M1–S20, I76–P235, R336–Q370, and A412–Q467. A compositionally biased stretch (acidic residues) spans D124–E135. The segment covering D162–T177 has biased composition (polar residues). Low complexity predominate over residues D180–S194. A compositionally biased stretch (basic and acidic residues) spans S198–E216. Residues T223 to P235 show a composition bias toward polar residues. The stretch at K310–K387 forms a coiled coil. Residues S421 to S439 show a composition bias toward low complexity.

It belongs to the CFAP97 family.

The chain is Cilia- and flagella-associated protein 97 from Xenopus tropicalis (Western clawed frog).